The primary structure comprises 180 residues: Lysine-specific demethylase 5C (180 aa).

A disordered region spans residues proline 116–glycine 159. At serine 148 the chain carries Phosphoserine.

This sequence belongs to the JARID1 histone demethylase family. As to quaternary structure, part of two distinct complexes, one containing E2F6, and the other containing REST. Interacts with ZMYND8. The cofactor is Fe(2+).

Its subcellular location is the nucleus. It catalyses the reaction N(6),N(6),N(6)-trimethyl-L-lysyl(4)-[histone H3] + 3 2-oxoglutarate + 3 O2 = L-lysyl(4)-[histone H3] + 3 formaldehyde + 3 succinate + 3 CO2. Functionally, histone demethylase that specifically demethylates 'Lys-4' of histone H3, thereby playing a central role in histone code. Does not demethylate histone H3 'Lys-9', H3 'Lys-27', H3 'Lys-36', H3 'Lys-79' or H4 'Lys-20'. Demethylates trimethylated and dimethylated but not monomethylated H3 'Lys-4'. Participates in transcriptional repression of neuronal genes by recruiting histone deacetylases and REST at neuron-restrictive silencer elements. Represses the CLOCK-BMAL1 heterodimer-mediated transcriptional activation of the core clock component PER2. The protein is Lysine-specific demethylase 5C (KDM5C) of Cricetulus griseus (Chinese hamster).